The sequence spans 180 residues: Translation initiation factor IF-3 (180 aa).

This sequence belongs to the IF-3 family. In terms of assembly, monomer.

Its subcellular location is the cytoplasm. IF-3 binds to the 30S ribosomal subunit and shifts the equilibrium between 70S ribosomes and their 50S and 30S subunits in favor of the free subunits, thus enhancing the availability of 30S subunits on which protein synthesis initiation begins. The protein is Translation initiation factor IF-3 of Caldanaerobacter subterraneus subsp. tengcongensis (strain DSM 15242 / JCM 11007 / NBRC 100824 / MB4) (Thermoanaerobacter tengcongensis).